The chain runs to 397 residues: Dual-specificity RNA methyltransferase RlmN (397 aa).

E130 serves as the catalytic Proton acceptor. A Radical SAM core domain is found at 138–377 (VEDRGAVCIS…ASPIRTPRGR (240 aa)). Cysteines 145 and 383 form a disulfide. Residues C152, C156, and C159 each coordinate [4Fe-4S] cluster. S-adenosyl-L-methionine contacts are provided by residues 209-210 (GE), S241, 263-265 (SLH), and N340. The active-site S-methylcysteine intermediate is C383.

Belongs to the radical SAM superfamily. RlmN family. Requires [4Fe-4S] cluster as cofactor.

The protein localises to the cytoplasm. The enzyme catalyses adenosine(2503) in 23S rRNA + 2 reduced [2Fe-2S]-[ferredoxin] + 2 S-adenosyl-L-methionine = 2-methyladenosine(2503) in 23S rRNA + 5'-deoxyadenosine + L-methionine + 2 oxidized [2Fe-2S]-[ferredoxin] + S-adenosyl-L-homocysteine. It carries out the reaction adenosine(37) in tRNA + 2 reduced [2Fe-2S]-[ferredoxin] + 2 S-adenosyl-L-methionine = 2-methyladenosine(37) in tRNA + 5'-deoxyadenosine + L-methionine + 2 oxidized [2Fe-2S]-[ferredoxin] + S-adenosyl-L-homocysteine. Functionally, specifically methylates position 2 of adenine 2503 in 23S rRNA and position 2 of adenine 37 in tRNAs. m2A2503 modification seems to play a crucial role in the proofreading step occurring at the peptidyl transferase center and thus would serve to optimize ribosomal fidelity. The sequence is that of Dual-specificity RNA methyltransferase RlmN from Granulibacter bethesdensis (strain ATCC BAA-1260 / CGDNIH1).